The primary structure comprises 361 residues: MHKDEDQRLLGAVPLPNDPDRSLRPQVLDDFIGQEAARANLKIFIEAAKARQEALDHVLFVGPPGLGKTTLSQIMAKELGVNFRSTSGPVIAKAGDLAALLTNLEERDVLFIDEIHRLSPAIEEILYPAMEDYQLDLIIGEGPAARSVKIDLAKFTLVAATTRLGLLTTPLRDRFGIPIRLNFYTIEELEYIVQRNARLFSVQISEDGAHEIARRARGTPRIAGRLLRRVCDFALVKRAKKIDRKIADEALSRLEVDHLGLDPLDRRYLLLIAQTFLGGPVGIETIAAALSEPRDAIEDIIEPYLLQQGFIQRTARGRILHQKAWSHLGLCAPASTQKHPQLFDMPDNASRQTVLWDEADD.

Residues 1–21 are disordered; that stretch reads MHKDEDQRLLGAVPLPNDPDR. Residues 1 to 184 are large ATPase domain (RuvB-L); sequence MHKDEDQRLL…FGIPIRLNFY (184 aa). ATP-binding positions include Leu23, Arg24, Gly65, Lys68, Thr69, Thr70, 131-133, Arg174, Tyr184, and Arg221; that span reads EDY. Mg(2+) is bound at residue Thr69. The interval 185–255 is small ATPAse domain (RuvB-S); the sequence is TIEELEYIVQ…IADEALSRLE (71 aa). The interval 258–361 is head domain (RuvB-H); that stretch reads HLGLDPLDRR…QTVLWDEADD (104 aa). DNA-binding residues include Arg294, Arg313, and Arg318.

Belongs to the RuvB family. In terms of assembly, homohexamer. Forms an RuvA(8)-RuvB(12)-Holliday junction (HJ) complex. HJ DNA is sandwiched between 2 RuvA tetramers; dsDNA enters through RuvA and exits via RuvB. An RuvB hexamer assembles on each DNA strand where it exits the tetramer. Each RuvB hexamer is contacted by two RuvA subunits (via domain III) on 2 adjacent RuvB subunits; this complex drives branch migration. In the full resolvosome a probable DNA-RuvA(4)-RuvB(12)-RuvC(2) complex forms which resolves the HJ.

It localises to the cytoplasm. The enzyme catalyses ATP + H2O = ADP + phosphate + H(+). In terms of biological role, the RuvA-RuvB-RuvC complex processes Holliday junction (HJ) DNA during genetic recombination and DNA repair, while the RuvA-RuvB complex plays an important role in the rescue of blocked DNA replication forks via replication fork reversal (RFR). RuvA specifically binds to HJ cruciform DNA, conferring on it an open structure. The RuvB hexamer acts as an ATP-dependent pump, pulling dsDNA into and through the RuvAB complex. RuvB forms 2 homohexamers on either side of HJ DNA bound by 1 or 2 RuvA tetramers; 4 subunits per hexamer contact DNA at a time. Coordinated motions by a converter formed by DNA-disengaged RuvB subunits stimulates ATP hydrolysis and nucleotide exchange. Immobilization of the converter enables RuvB to convert the ATP-contained energy into a lever motion, pulling 2 nucleotides of DNA out of the RuvA tetramer per ATP hydrolyzed, thus driving DNA branch migration. The RuvB motors rotate together with the DNA substrate, which together with the progressing nucleotide cycle form the mechanistic basis for DNA recombination by continuous HJ branch migration. Branch migration allows RuvC to scan DNA until it finds its consensus sequence, where it cleaves and resolves cruciform DNA. This Bartonella henselae (strain ATCC 49882 / DSM 28221 / CCUG 30454 / Houston 1) (Rochalimaea henselae) protein is Holliday junction branch migration complex subunit RuvB.